Consider the following 319-residue polypeptide: MKPVFLDFEQPIAELTNKIDELRFVQDESAVDISDEIHRLQKKSNDLTKSIFSKLTPAQISQVSRHPQRPYTLDYIDALFTDFEELHGDRHFADDHAIVGGLARFNGQSVVVVGHQKGRDTKEKIRRNFGMPRPEGYRKALRLMKTAEKFGLPVMTFIDTPGAYPGIGAEERGQSEAIGKNLYELTRLRVPVLCTVIGEGGSGGALAVAVGDYVNMLQYSTYSVISPEGCASILWKTAEKAADAAQALGITADRLQKLDLVDTVIKEPLGGAHRDFGQTMKNVKAVLEKQLHEAQSIPLADLLSRRFDRIMAYGKFSEQ.

The CoA carboxyltransferase C-terminal domain occupies 39–293; it reads RLQKKSNDLT…KAVLEKQLHE (255 aa).

The protein belongs to the AccA family. In terms of assembly, acetyl-CoA carboxylase is a heterohexamer composed of biotin carboxyl carrier protein (AccB), biotin carboxylase (AccC) and two subunits each of ACCase subunit alpha (AccA) and ACCase subunit beta (AccD).

It is found in the cytoplasm. It catalyses the reaction N(6)-carboxybiotinyl-L-lysyl-[protein] + acetyl-CoA = N(6)-biotinyl-L-lysyl-[protein] + malonyl-CoA. It functions in the pathway lipid metabolism; malonyl-CoA biosynthesis; malonyl-CoA from acetyl-CoA: step 1/1. Its function is as follows. Component of the acetyl coenzyme A carboxylase (ACC) complex. First, biotin carboxylase catalyzes the carboxylation of biotin on its carrier protein (BCCP) and then the CO(2) group is transferred by the carboxyltransferase to acetyl-CoA to form malonyl-CoA. This is Acetyl-coenzyme A carboxylase carboxyl transferase subunit alpha from Neisseria gonorrhoeae (strain ATCC 700825 / FA 1090).